The chain runs to 136 residues: Large ribosomal subunit protein bL17 (136 aa).

It belongs to the bacterial ribosomal protein bL17 family. Part of the 50S ribosomal subunit. Contacts protein L32.

This chain is Large ribosomal subunit protein bL17, found in Rickettsia peacockii (strain Rustic).